Reading from the N-terminus, the 341-residue chain is Fructose-1,6-bisphosphatase class 1 1 (341 aa).

Glu-92, Asp-114, Leu-116, and Asp-117 together coordinate Mg(2+). Substrate-binding positions include 117–120 (DGSS), Asn-209, and Lys-275. Glu-281 is a Mg(2+) binding site.

The protein belongs to the FBPase class 1 family. As to quaternary structure, homotetramer. Mg(2+) is required as a cofactor.

The protein localises to the cytoplasm. The catalysed reaction is beta-D-fructose 1,6-bisphosphate + H2O = beta-D-fructose 6-phosphate + phosphate. It functions in the pathway carbohydrate biosynthesis; gluconeogenesis. This Leptothrix cholodnii (strain ATCC 51168 / LMG 8142 / SP-6) (Leptothrix discophora (strain SP-6)) protein is Fructose-1,6-bisphosphatase class 1 1.